We begin with the raw amino-acid sequence, 166 residues long: Large ribosomal subunit protein uL10 (166 aa).

The protein belongs to the universal ribosomal protein uL10 family. As to quaternary structure, part of the ribosomal stalk of the 50S ribosomal subunit. The N-terminus interacts with L11 and the large rRNA to form the base of the stalk. The C-terminus forms an elongated spine to which L12 dimers bind in a sequential fashion forming a multimeric L10(L12)X complex.

Forms part of the ribosomal stalk, playing a central role in the interaction of the ribosome with GTP-bound translation factors. This is Large ribosomal subunit protein uL10 from Aromatoleum aromaticum (strain DSM 19018 / LMG 30748 / EbN1) (Azoarcus sp. (strain EbN1)).